The sequence spans 285 residues: Aquaporin-6 (285 aa).

3 helical membrane passes run 36 to 56 (IFWK…VFSC), 76 to 96 (YCFK…ALLL), and 105 to 125 (ISLV…CYYG). The NPA 1 signature appears at 86 to 88 (NPV). Residue Asn128 is glycosylated (N-linked (GlcNAc...) asparagine). Helical transmembrane passes span 143–163 (VSPA…ILTM) and 177–197 (GDSN…SGMA). The short motif at 206–208 (NPM) is the NPA 2 element. A helical membrane pass occupies residues 225–245 (YIYWIGPIFGCLLAVFTFDYT).

This sequence belongs to the MIP/aquaporin (TC 1.A.8) family.

It is found in the cell membrane. In terms of biological role, probable water-specific aquaporin that may modulate the water content and osmolytes during anhydrobiosis. This is Aquaporin-6 from Milnesium tardigradum (Water bear).